Reading from the N-terminus, the 140-residue chain is 6,7-dimethyl-8-ribityllumazine synthase (140 aa).

Residues Phe-11, 43 to 45 (SFD), and 67 to 69 (CVI) contribute to the 5-amino-6-(D-ribitylamino)uracil site. 72–73 (DT) serves as a coordination point for (2S)-2-hydroxy-3-oxobutyl phosphate. His-75 acts as the Proton donor in catalysis. Leu-100 contributes to the 5-amino-6-(D-ribitylamino)uracil binding site. Arg-115 serves as a coordination point for (2S)-2-hydroxy-3-oxobutyl phosphate.

It belongs to the DMRL synthase family. Forms an icosahedral capsid composed of 60 subunits, arranged as a dodecamer of pentamers.

The catalysed reaction is (2S)-2-hydroxy-3-oxobutyl phosphate + 5-amino-6-(D-ribitylamino)uracil = 6,7-dimethyl-8-(1-D-ribityl)lumazine + phosphate + 2 H2O + H(+). The protein operates within cofactor biosynthesis; riboflavin biosynthesis; riboflavin from 2-hydroxy-3-oxobutyl phosphate and 5-amino-6-(D-ribitylamino)uracil: step 1/2. Functionally, catalyzes the formation of 6,7-dimethyl-8-ribityllumazine by condensation of 5-amino-6-(D-ribitylamino)uracil with 3,4-dihydroxy-2-butanone 4-phosphate. This is the penultimate step in the biosynthesis of riboflavin. The polypeptide is 6,7-dimethyl-8-ribityllumazine synthase (Methanococcus vannielii (strain ATCC 35089 / DSM 1224 / JCM 13029 / OCM 148 / SB)).